We begin with the raw amino-acid sequence, 69 residues long: Antimicrobial peptide Meucin-18 (69 aa).

The signal sequence occupies residues Met1–Ala16. Residues Glu38–Tyr69 constitute a propeptide that is removed on maturation.

The protein belongs to the non-disulfide-bridged peptide (NDBP) superfamily. Medium-length antimicrobial peptide (group 3) family. As to expression, expressed by the venom gland.

Its subcellular location is the secreted. The protein resides in the target cell membrane. Amphipathic peptide that exhibits extensive cytolytic activities against both prokaryotic and eukaryotic cells. Acts by fastly disrupting the bacterial membrane. Is more potent against Gram-positive bacteria than against Gram-negative bacteria, and fungi (LC=25.1-8.3 uM). Shows potent activity against penicillin (MIC=3.0 uM) and methicillin (MIC=1.5-3.0 uM) resistant bacteria. Is lethal to the fungus Beauveria sp (LC=1.9 uM), a highly lethal pathogenic fungus to insects and resistant to many AMPs. Shows hemolytic activity against rabbit erythrocytes (37.7% of inhibition at 6.25 uM) and cytolysis against rat dorsal root ganglions. May act by disrupting the integrity of the bacterial cell membrane. Antibiotic activity is not affected by major negatively charged components of the prokaryotic cell wall (e.g. lipopolysaccharides and lipoteichoic acid). In vivo, intravenous injection into mice tail provokes uncomfortable symptoms with a death rate of 12.5%. In vivo, in a mouse model of lethal peritonitis, shows potent antibiotic activity without cytotoxicity, improving the survival rate. In Mesobuthus eupeus (Lesser Asian scorpion), this protein is Antimicrobial peptide Meucin-18.